The following is a 142-amino-acid chain: Large ribosomal subunit protein uL13 (142 aa).

The protein belongs to the universal ribosomal protein uL13 family. In terms of assembly, part of the 50S ribosomal subunit.

Functionally, this protein is one of the early assembly proteins of the 50S ribosomal subunit, although it is not seen to bind rRNA by itself. It is important during the early stages of 50S assembly. This is Large ribosomal subunit protein uL13 from Pectobacterium carotovorum subsp. carotovorum (strain PC1).